The sequence spans 213 residues: Probable anti-sigma-F factor NrsF (213 aa).

6 helical membrane passes run 27 to 47 (ALAIGWGAAGATLLMLALLQV), 51 to 71 (LGLALLLPMFWVKVGFVTCLA), 91 to 111 (VPAALGLPVLGMWAIAAFTLI), 126 to 146 (TWKSCPLLIAMLSVPVFAAVL), 159 to 179 (LAGFAAGLLAGAVAAVVYCLH), and 187 to 207 (FIGFWYLLGMLIPAAVGVLLG).

Belongs to the NrsF anti-sigma-F factor family.

Its subcellular location is the cell inner membrane. Functionally, probably an anti-sigma factor for extracytoplasmic function (ECF) sigma factor sigma-F (SigF), which responds to (hypo)chlorite. ECF sigma factors are held in an inactive form by a cognate anti-sigma factor. The protein is Probable anti-sigma-F factor NrsF of Azospira oryzae (strain ATCC BAA-33 / DSM 13638 / PS) (Dechlorosoma suillum).